The primary structure comprises 429 residues: Aspartate--tRNA(Asp/Asn) ligase (429 aa).

L-aspartate is bound at residue E166. An aspartate region spans residues 188–191 (QLYK). R210 is a binding site for L-aspartate. ATP contacts are provided by residues 210–212 (RAE), 218–220 (RHL), and E352. Positions 352 and 355 each coordinate Mg(2+). Positions 355 and 359 each coordinate L-aspartate. Residue 400–403 (GAER) participates in ATP binding.

It belongs to the class-II aminoacyl-tRNA synthetase family. Type 2 subfamily. In terms of assembly, homodimer. Requires Mg(2+) as cofactor.

The protein resides in the cytoplasm. It catalyses the reaction tRNA(Asx) + L-aspartate + ATP = L-aspartyl-tRNA(Asx) + AMP + diphosphate. Functionally, aspartyl-tRNA synthetase with relaxed tRNA specificity since it is able to aspartylate not only its cognate tRNA(Asp) but also tRNA(Asn). Reaction proceeds in two steps: L-aspartate is first activated by ATP to form Asp-AMP and then transferred to the acceptor end of tRNA(Asp/Asn). The chain is Aspartate--tRNA(Asp/Asn) ligase from Methanocorpusculum labreanum (strain ATCC 43576 / DSM 4855 / Z).